The chain runs to 317 residues: Tyrosine--tRNA ligase (317 aa).

Y33 provides a ligand contact to L-tyrosine. The short motif at P38–H46 is the 'HIGH' region element. L-tyrosine contacts are provided by Y155, Q159, D162, and Q177. Positions K211–S215 match the 'KMSKS' region motif. Position 214 (S214) interacts with ATP.

The protein belongs to the class-I aminoacyl-tRNA synthetase family. TyrS type 3 subfamily. As to quaternary structure, homodimer.

The protein resides in the cytoplasm. It catalyses the reaction tRNA(Tyr) + L-tyrosine + ATP = L-tyrosyl-tRNA(Tyr) + AMP + diphosphate + H(+). Its function is as follows. Catalyzes the attachment of tyrosine to tRNA(Tyr) in a two-step reaction: tyrosine is first activated by ATP to form Tyr-AMP and then transferred to the acceptor end of tRNA(Tyr). The protein is Tyrosine--tRNA ligase of Methanosarcina mazei (strain ATCC BAA-159 / DSM 3647 / Goe1 / Go1 / JCM 11833 / OCM 88) (Methanosarcina frisia).